Consider the following 429-residue polypeptide: Probable M18 family aminopeptidase 2 (429 aa).

Positions 82, 156, and 401 each coordinate Zn(2+).

The protein belongs to the peptidase M18 family. Requires Zn(2+) as cofactor.

This is Probable M18 family aminopeptidase 2 from Pseudomonas aeruginosa (strain UCBPP-PA14).